A 271-amino-acid chain; its full sequence is Formamidopyrimidine-DNA glycosylase (271 aa).

Proline 2 acts as the Schiff-base intermediate with DNA in catalysis. Glutamate 3 functions as the Proton donor in the catalytic mechanism. Residue lysine 57 is the Proton donor; for beta-elimination activity of the active site. The DNA site is built by histidine 90, arginine 109, and lysine 150. Residues leucine 235–lysine 269 form an FPG-type zinc finger. The active-site Proton donor; for delta-elimination activity is the arginine 259.

It belongs to the FPG family. In terms of assembly, monomer. Requires Zn(2+) as cofactor.

It catalyses the reaction Hydrolysis of DNA containing ring-opened 7-methylguanine residues, releasing 2,6-diamino-4-hydroxy-5-(N-methyl)formamidopyrimidine.. The catalysed reaction is 2'-deoxyribonucleotide-(2'-deoxyribose 5'-phosphate)-2'-deoxyribonucleotide-DNA = a 3'-end 2'-deoxyribonucleotide-(2,3-dehydro-2,3-deoxyribose 5'-phosphate)-DNA + a 5'-end 5'-phospho-2'-deoxyribonucleoside-DNA + H(+). Involved in base excision repair of DNA damaged by oxidation or by mutagenic agents. Acts as a DNA glycosylase that recognizes and removes damaged bases. Has a preference for oxidized purines, such as 7,8-dihydro-8-oxoguanine (8-oxoG). Has AP (apurinic/apyrimidinic) lyase activity and introduces nicks in the DNA strand. Cleaves the DNA backbone by beta-delta elimination to generate a single-strand break at the site of the removed base with both 3'- and 5'-phosphates. This is Formamidopyrimidine-DNA glycosylase from Haemophilus influenzae (strain 86-028NP).